The primary structure comprises 55 residues: Protein CADMIUM TOLERANCE 1 (55 aa).

The chain crosses the membrane as a helical span at residues 24-40; the sequence is GCLYACIFTALCCFCCY.

This sequence belongs to the CYSTM1 family.

It localises to the cell membrane. It is found in the secreted. Its subcellular location is the cell wall. In terms of biological role, confers resistance to heavy metal ions (e.g. cadmium (CdCl(2)) and copper (CuCl(2))) by chelating them at the plasma membrane of root cells, thus stopping their entry and reducing their accumulation. The polypeptide is Protein CADMIUM TOLERANCE 1 (Echinochloa crus-galli subsp. caudata (Cockspur)).